The following is a 451-amino-acid chain: Tubulin alpha-3 chain (451 aa).

GTP is bound at residue Q11. K40 carries the post-translational modification N6-acetyllysine. Residues E71, S140, G144, T145, T179, N206, and N228 each contribute to the GTP site. Residue E71 participates in Mg(2+) binding. E254 is a catalytic residue.

It belongs to the tubulin family. As to quaternary structure, dimer of alpha and beta chains. A typical microtubule is a hollow water-filled tube with an outer diameter of 25 nm and an inner diameter of 15 nM. Alpha-beta heterodimers associate head-to-tail to form protofilaments running lengthwise along the microtubule wall with the beta-tubulin subunit facing the microtubule plus end conferring a structural polarity. Microtubules usually have 13 protofilaments but different protofilament numbers can be found in some organisms and specialized cells. The cofactor is Mg(2+). Post-translationally, undergoes a tyrosination/detyrosination cycle, the cyclic removal and re-addition of a C-terminal tyrosine residue by the enzymes tubulin tyrosine carboxypeptidase (TTCP) and tubulin tyrosine ligase (TTL), respectively. In terms of processing, acetylation of alpha chains at Lys-40 stabilizes microtubules and affects affinity and processivity of microtubule motors. This modification has a role in multiple cellular functions, ranging from cell motility, cell cycle progression or cell differentiation to intracellular trafficking and signaling.

Its subcellular location is the cytoplasm. It localises to the cytoskeleton. It catalyses the reaction GTP + H2O = GDP + phosphate + H(+). Tubulin is the major constituent of microtubules, a cylinder consisting of laterally associated linear protofilaments composed of alpha- and beta-tubulin heterodimers. Microtubules grow by the addition of GTP-tubulin dimers to the microtubule end, where a stabilizing cap forms. Below the cap, tubulin dimers are in GDP-bound state, owing to GTPase activity of alpha-tubulin. This Homarus americanus (American lobster) protein is Tubulin alpha-3 chain.